We begin with the raw amino-acid sequence, 360 residues long: NAD(P)H-quinone oxidoreductase subunit 1, chloroplastic (360 aa).

Helical transmembrane passes span 27–47, 98–118, 129–149, 165–185, 203–223, 248–268, 269–289, 297–317, and 340–360; these read IWIF…VLVI, FSIG…VIPF, IGIF…LMSG, AAQS…ISLL, FWGW…ISSL, YSGI…LISS, LFVT…ISIL, IFGT…FLFI, and FLLP…LFSL.

The protein belongs to the complex I subunit 1 family. NDH is composed of at least 16 different subunits, 5 of which are encoded in the nucleus.

It localises to the plastid. The protein resides in the chloroplast thylakoid membrane. The enzyme catalyses a plastoquinone + NADH + (n+1) H(+)(in) = a plastoquinol + NAD(+) + n H(+)(out). It carries out the reaction a plastoquinone + NADPH + (n+1) H(+)(in) = a plastoquinol + NADP(+) + n H(+)(out). In terms of biological role, NDH shuttles electrons from NAD(P)H:plastoquinone, via FMN and iron-sulfur (Fe-S) centers, to quinones in the photosynthetic chain and possibly in a chloroplast respiratory chain. The immediate electron acceptor for the enzyme in this species is believed to be plastoquinone. Couples the redox reaction to proton translocation, and thus conserves the redox energy in a proton gradient. The polypeptide is NAD(P)H-quinone oxidoreductase subunit 1, chloroplastic (Lepidium virginicum (Virginia pepperweed)).